A 489-amino-acid polypeptide reads, in one-letter code: Palmitoyltransferase ZDHHC14 (489 aa).

Residues 1–60 (MPPGGGGPMKDCEYSQISTHSSSPMESPHKKKKIAARRKWEVFPGRNKFFCNGRIMMARQ) lie on the Cytoplasmic side of the membrane. A helical transmembrane segment spans residues 61–81 (TGVFYLTLILILVTSGLFFAF). Over 82–89 (DCRYLAEK) the chain is Lumenal. A helical membrane pass occupies residues 90 to 110 (ITPAIPVVGGILFFFVMGTLL). At 111–208 (RTSFSDPGVL…GNCVGKRNYR (98 aa)) the chain is on the cytoplasmic side. Residues 165–215 (KYCFTCKIFRPPRASHCSLCDNCVEQFDHHCPWVGNCVGKRNYRFFYMFIL) enclose the DHHC domain. The active-site S-palmitoyl cysteine intermediate is C195. The helical transmembrane segment at 209–229 (FFYMFILSLSFLTVFIFAFVI) threads the bilayer. Over 230–255 (THVIHRSQQKGFLDALKDSPASVLEA) the chain is Lumenal. Residues 256–276 (VICFFSVWSIIGLSGFHTYLI) traverse the membrane as a helical segment. Topologically, residues 277–489 (SSNQTTNEDI…VRGLVKLSSV (213 aa)) are cytoplasmic. The segment at 434–454 (HGGHQFLTPDEAPSPPRMLGA) is disordered. S456 is modified (phosphoserine).

Belongs to the DHHC palmitoyltransferase family. ERF2/ZDHHC9 subfamily.

The protein resides in the endoplasmic reticulum membrane. It localises to the golgi apparatus membrane. The enzyme catalyses L-cysteinyl-[protein] + hexadecanoyl-CoA = S-hexadecanoyl-L-cysteinyl-[protein] + CoA. Functionally, palmitoyltransferase that could catalyze the addition of palmitate onto various protein substrates. May have a palmitoyltransferase activity toward the beta-2 adrenergic receptor/ADRB2 and thereby regulate G protein-coupled receptor signaling. May play a role in cell differentiation and apoptosis. The chain is Palmitoyltransferase ZDHHC14 from Mus musculus (Mouse).